A 433-amino-acid chain; its full sequence is Oxaloacetate decarboxylase beta chain 2 (433 aa).

A run of 9 helical transmembrane segments spans residues 13–35, 42–64, 125–147, 160–182, 214–236, 266–288, 308–327, 339–361, and 413–432; these read LMHL…WLAI, LLLL…LALT, LFYK…VGAM, LLLG…TLNY, LAPE…VPLI, ILFP…PLLG, TVQN…SVGA, TLGI…VLMA, and VAGV…YVLA.

Belongs to the GcdB/MmdB/OadB family. As to quaternary structure, heterotrimer of an alpha, a beta and a gamma subunit. Na(+) serves as cofactor.

It localises to the cell membrane. It carries out the reaction oxaloacetate + 2 Na(+)(in) + H(+) = pyruvate + 2 Na(+)(out) + CO2. Its function is as follows. Catalyzes the decarboxylation of oxaloacetate coupled to Na(+) translocation. The protein is Oxaloacetate decarboxylase beta chain 2 (oadB2) of Salmonella typhimurium (strain LT2 / SGSC1412 / ATCC 700720).